Here is a 311-residue protein sequence, read N- to C-terminus: Olfactory receptor 1N1 (311 aa).

Residues 1–23 (MENQSSISEFFLRGISAPPEQQQ) lie on the Extracellular side of the membrane. N-linked (GlcNAc...) asparagine glycosylation is present at Asn-3. The chain crosses the membrane as a helical span at residues 24–47 (SLFGIFLCMYLVTLTGNLLIILAI). The Cytoplasmic segment spans residues 48-55 (GSDLHLHT). Residues 56–77 (PMYFFLANLSFVDMGLTSSTVT) form a helical membrane-spanning segment. Over 78-98 (KMLVNIQTRHHTISYTGCLTQ) the chain is Extracellular. A disulfide bridge connects residues Cys-95 and Cys-187. The chain crosses the membrane as a helical span at residues 99 to 118 (MYFFLMFGDLDSFFLAAMAY). At 119–137 (DRYVAICHPLCYSTVMRPQ) the chain is on the cytoplasmic side. Residues 138–156 (VCALMLALCWVLTNIVALT) form a helical membrane-spanning segment. The Extracellular portion of the chain corresponds to 157–194 (HTFLMARLSFCVTGEIAHFFCDITPVLKLSCSDTHINE). Residues 195 to 217 (MMVFVLGGTVLIVPFLCIVTSYI) traverse the membrane as a helical segment. Over 218-234 (HIVPAILRVRTRGGVGK) the chain is Cytoplasmic. The chain crosses the membrane as a helical span at residues 235–257 (AFSTCSSHLCVVCVFYGTLFSAY). Residues 258–270 (LCPPSIASEEKDI) lie on the Extracellular side of the membrane. The chain crosses the membrane as a helical span at residues 271 to 290 (AAAAMYTIVTPMLNPFIYSL). Over 291–311 (RNKDMKGALKRLFSHRSIVSS) the chain is Cytoplasmic.

Belongs to the G-protein coupled receptor 1 family.

The protein localises to the cell membrane. Functionally, odorant receptor. The protein is Olfactory receptor 1N1 (OR1N1) of Homo sapiens (Human).